The chain runs to 238 residues: Endonuclease V (238 aa).

Mg(2+) is bound by residues aspartate 46 and aspartate 116.

It belongs to the endonuclease V family. Mg(2+) is required as a cofactor.

It localises to the cytoplasm. It catalyses the reaction Endonucleolytic cleavage at apurinic or apyrimidinic sites to products with a 5'-phosphate.. Its function is as follows. DNA repair enzyme involved in the repair of deaminated bases. Selectively cleaves double-stranded DNA at the second phosphodiester bond 3' to a deoxyinosine leaving behind the intact lesion on the nicked DNA. The protein is Endonuclease V of Bacillus velezensis (strain DSM 23117 / BGSC 10A6 / LMG 26770 / FZB42) (Bacillus amyloliquefaciens subsp. plantarum).